Here is a 141-residue protein sequence, read N- to C-terminus: Large ribosomal subunit protein uL16c (141 aa).

The protein belongs to the universal ribosomal protein uL16 family. In terms of assembly, part of the 50S ribosomal subunit.

The protein localises to the plastid. It is found in the chloroplast. The sequence is that of Large ribosomal subunit protein uL16c from Zygnema circumcarinatum (Green alga).